Here is a 357-residue protein sequence, read N- to C-terminus: Dihydroorotate dehydrogenase (quinone) (357 aa).

FMN-binding positions include 67 to 71 (AGFDK) and threonine 91. Position 71 (lysine 71) interacts with substrate. 116–120 (NRMGF) serves as a coordination point for substrate. 2 residues coordinate FMN: asparagine 153 and asparagine 186. Position 186 (asparagine 186) interacts with substrate. Serine 189 serves as the catalytic Nucleophile. Asparagine 191 provides a ligand contact to substrate. FMN-binding residues include lysine 228 and threonine 256. A substrate-binding site is contributed by 257-258 (NT). FMN-binding positions include glycine 282, glycine 311, and 332 to 333 (YT).

It belongs to the dihydroorotate dehydrogenase family. Type 2 subfamily. As to quaternary structure, monomer. It depends on FMN as a cofactor.

It localises to the cell membrane. The catalysed reaction is (S)-dihydroorotate + a quinone = orotate + a quinol. Its pathway is pyrimidine metabolism; UMP biosynthesis via de novo pathway; orotate from (S)-dihydroorotate (quinone route): step 1/1. Catalyzes the conversion of dihydroorotate to orotate with quinone as electron acceptor. The chain is Dihydroorotate dehydrogenase (quinone) from Arthrobacter sp. (strain FB24).